A 200-amino-acid polypeptide reads, in one-letter code: Recombination protein RecR (200 aa).

The C4-type zinc-finger motif lies at 57–72 (CSECRTFTEEDTCAIC). A Toprim domain is found at 81-176 (GEMCIVESPA…PASRIAHGVP (96 aa)).

The protein belongs to the RecR family.

May play a role in DNA repair. It seems to be involved in an RecBC-independent recombinational process of DNA repair. It may act with RecF and RecO. The polypeptide is Recombination protein RecR (Aliivibrio fischeri (strain ATCC 700601 / ES114) (Vibrio fischeri)).